The chain runs to 90 residues: [Phe8]-phyllolitorin (90 aa).

The signal sequence occupies residues Met1 to Cys30. A propeptide spanning residues Lys31–Arg48 is cleaved from the precursor. The residue at position 49 (Gln49) is a Pyrrolidone carboxylic acid. The residue at position 57 (Met57) is a Methionine amide. A propeptide spanning residues Ser61–Asp90 is cleaved from the precursor.

The protein belongs to the bombesin/neuromedin-B/ranatensin family. Expressed by the skin glands.

Its subcellular location is the secreted. This is [Phe8]-phyllolitorin from Phyllomedusa sauvagei (Sauvage's leaf frog).